A 215-amino-acid chain; its full sequence is Adenylate kinase (215 aa).

Residue 10–15 (GAGKGT) coordinates ATP. Residues 30-59 (STGDMFRAAMKNNTELGKKAKSFMDNGDLV) form an NMP region. Residues Thr31, Arg36, 57-59 (DLV), 85-88 (GFPR), and Gln92 contribute to the AMP site. The segment at 126–163 (GRWICRTCGKTYHEIYNPPKVPGKCDLDGGELYQRDDD) is LID. Arg127 provides a ligand contact to ATP. Zn(2+) contacts are provided by Cys130 and Cys133. Position 136–137 (136–137 (TY)) interacts with ATP. The Zn(2+) site is built by Cys150 and Asp153. Arg160 and Arg171 together coordinate AMP. An ATP-binding site is contributed by Gln199.

This sequence belongs to the adenylate kinase family. In terms of assembly, monomer.

Its subcellular location is the cytoplasm. It catalyses the reaction AMP + ATP = 2 ADP. It participates in purine metabolism; AMP biosynthesis via salvage pathway; AMP from ADP: step 1/1. Catalyzes the reversible transfer of the terminal phosphate group between ATP and AMP. Plays an important role in cellular energy homeostasis and in adenine nucleotide metabolism. The sequence is that of Adenylate kinase from Listeria monocytogenes serotype 4b (strain CLIP80459).